The sequence spans 210 residues: Rho-related GTP-binding protein RhoD (210 aa).

24-31 (GDGGCGKT) is a GTP binding site. The Effector region motif lies at 46 to 54 (YSPTVFERY). GTP is bound by residues 71 to 75 (DTAGQ) and 129 to 132 (CKID). Cysteine methyl ester is present on Cys-207. Cys-207 carries the S-geranylgeranyl cysteine lipid modification. The propeptide at 208–210 (LAT) is removed in mature form.

This sequence belongs to the small GTPase superfamily. Rho family. In terms of assembly, interacts with PAK5. Interacts (in GTP-bound form) with DAPK3, FILIP1 and WHAMM. Interacts (independent of GTP-loaded status) with ANKFY1. In terms of tissue distribution, widely expressed.

The protein resides in the cell membrane. The protein localises to the early endosome. Functionally, involved in endosome dynamics. May coordinate membrane transport with the function of the cytoskeleton. Involved in the internalization and trafficking of activated tyrosine kinase receptors such as PDGFRB. Participates in the reorganization of actin cytoskeleton; the function seems to involve WHAMM and includes regulation of filopodia formation and actin filament bundling. Can modulate the effect of DAPK3 in reorganization of actin cytoskeleton and focal adhesion dissolution. The polypeptide is Rho-related GTP-binding protein RhoD (Rhod) (Mus musculus (Mouse)).